The following is a 1245-amino-acid chain: Trafficking protein particle complex II-specific subunit 130 homolog (1245 aa).

Disordered stretches follow at residues 488–524 (GDGS…TSLP) and 884–903 (HVGG…TRKV). Low complexity-rich tracts occupy residues 495-507 (ANSK…SASN) and 888-898 (TDASKTSSSST).

It belongs to the TMEM1 family. Part of the multisubunit TRAPP (transport protein particle) II complex composed of BET3, BET5, TRS20, TRS23, TRS31, TRS33, TRS65, TRS85, TRS120 and TRS130.

The protein localises to the golgi apparatus. Its subcellular location is the trans-Golgi network. The protein resides in the early endosome. In terms of biological role, specific subunit of the TRAPP II complex, a highly conserved vesicle tethering complex that is required for the proper transport of proteins in post-Golgi trafficking pathways to the growing cell plate in mitotic active cells. This chain is Trafficking protein particle complex II-specific subunit 130 homolog, found in Oryza sativa subsp. japonica (Rice).